A 399-amino-acid polypeptide reads, in one-letter code: Serine palmitoyltransferase (399 aa).

Pyridoxal 5'-phosphate is bound by residues 113–114 (GF), His-213, Thr-241, and Ser-243. Position 244 is an N6-(pyridoxal phosphate)lysine (Lys-244).

Belongs to the class-II pyridoxal-phosphate-dependent aminotransferase family. In terms of assembly, homodimer. Pyridoxal 5'-phosphate serves as cofactor.

It localises to the cytoplasm. It is found in the cell inner membrane. The catalysed reaction is L-serine + hexadecanoyl-CoA + H(+) = 3-oxosphinganine + CO2 + CoA. The protein operates within lipid metabolism; sphingolipid metabolism. Functionally, catalyzes the condensation of L-serine with palmitoyl-CoA (hexadecanoyl-CoA) to produce 3-oxosphinganine. Exhibits a broad substrate specificity concerning the chain length and the degree of unsaturation of acyl-CoA. The chain is Serine palmitoyltransferase from Sphingobacterium multivorum.